A 63-amino-acid polypeptide reads, in one-letter code: Large ribosomal subunit protein bL35 (63 aa).

It belongs to the bacterial ribosomal protein bL35 family.

The polypeptide is Large ribosomal subunit protein bL35 (Sulfurovum sp. (strain NBC37-1)).